The following is a 532-amino-acid chain: Carboxypeptidase Y (532 aa).

Positions 1–20 are cleaved as a signal peptide; that stretch reads MKAFTSLLCGLGLSTTLAKA. Residues 21-111 constitute a propeptide, mediates translocation across the endoplasmic reticulum, renders the enzyme inactive during transit, and targets the molecule to the vacuole; that stretch reads ISLQRPLGLD…AIENYQLRVN (91 aa). The short motif at 24–27 is the Vacuolar targeting signal element; sequence QRPL. N-linked (GlcNAc...) (high mannose) asparagine glycans are attached at residues Asn-124 and Asn-198. Cystine bridges form between Cys-167-Cys-409, Cys-304-Cys-318, Cys-328-Cys-351, Cys-335-Cys-344, and Cys-373-Cys-379. The active site involves Ser-257. An N-linked (GlcNAc...) (high mannose) asparagine glycan is attached at Asn-279. Residue Asp-449 is part of the active site. Residue Cys-452 participates in substrate binding. N-linked (GlcNAc...) (high mannose) asparagine glycosylation occurs at Asn-479. The active site involves His-508. Met-509 lines the substrate pocket.

This sequence belongs to the peptidase S10 family. Post-translationally, enters the endoplasmic reticulum as an inactive zymogen and is modified by four N-linked core oligosaccharides, giving rise to a precursor known as P1 (67 kDa). As P1 transits through the Golgi, extension of its core oligosaccharides leads to the Golgi-modified P2 precursor (69 kDa). P2 is sorted away from secretory proteins at or beyond a late Golgi compartment and is subsequently delivered to the vacuole via a prevacuolar endosome-like compartment. Upon arrival in the vacuole, the N-terminal prosegment of P2 is cleaved by vacuolar proteases to yield the enzymatically active mature vacuolar form of CPY (61 kDa). In terms of processing, the four high mannose core N-glycans found in mature CPY are Man(11-15)GlcNAc(2) at Asn-124, Man(8-12)GlcNAc(2) at Asn-198, Man(9-14)GlcNAc(2) at Asn-279 and phosphorylated Man(12-17)GlcNAc(2) as well as Man(11-16)GlcNAc(2) at Asn-479.

It is found in the vacuole lumen. The catalysed reaction is Release of a C-terminal amino acid with broad specificity.. Inhibited by ZPCK. Functionally, vacuolar serine-type carboxypeptidase involved in degradation of small peptides. Digests preferentially peptides containing an aliphatic or hydrophobic residue in P1' position, as well as methionine, leucine or phenylalanine in P1 position of ester substrate. Also plays a role in breakdown of the autophagic body and the autophagosome-dependent protein synthesis. Plays a key role in phytochelatin (PC) synthesis from glutathione (GSH) by cleaving the Gly from GSH and form the PC-peptides of the structure (gamma-Glu-Cys)2-Gly. Also involved in resistance to xenobiotics via the degradation of glutathione-S-conjugates. The protein is Carboxypeptidase Y of Saccharomyces cerevisiae (strain ATCC 204508 / S288c) (Baker's yeast).